An 82-amino-acid polypeptide reads, in one-letter code: Exodeoxyribonuclease 7 small subunit (82 aa).

It belongs to the XseB family. As to quaternary structure, heterooligomer composed of large and small subunits.

It localises to the cytoplasm. The enzyme catalyses Exonucleolytic cleavage in either 5'- to 3'- or 3'- to 5'-direction to yield nucleoside 5'-phosphates.. In terms of biological role, bidirectionally degrades single-stranded DNA into large acid-insoluble oligonucleotides, which are then degraded further into small acid-soluble oligonucleotides. This chain is Exodeoxyribonuclease 7 small subunit, found in Mycobacterium marinum (strain ATCC BAA-535 / M).